Consider the following 49-residue polypeptide: Large ribosomal subunit protein bL33 (49 aa).

Belongs to the bacterial ribosomal protein bL33 family.

In Thermosipho melanesiensis (strain DSM 12029 / CIP 104789 / BI429), this protein is Large ribosomal subunit protein bL33.